Reading from the N-terminus, the 651-residue chain is Bromodomain-containing protein 7 (651 aa).

Disordered stretches follow at residues 36-133 (ELST…EVEQ) and 257-298 (KDKV…KKKD). Over residues 58 to 69 (HKDRKRKKRKKG) the composition is skewed to basic residues. Positions 65–96 (KRKKGEKQVPGEEKEKRKRKVKEDKRKRDREH) match the Nuclear localization signal motif. The span at 70 to 105 (EKQVPGEEKEKRKRKVKEDKRKRDREHPDSEGEQEL) shows a compositional bias: basic and acidic residues. One can recognise a Bromo domain in the interval 131–235 (VEQTPLQEAL…HSGMKILSQE (105 aa)). Residues 271–298 (GSGKDKGEPVDGDTKAFKTPNKEHKKKD) are compositionally biased toward basic and acidic residues. A coiled-coil region spans residues 533–564 (SEEAEIFQRKLDETTKLLRELQDAQNERLSTK).

It is found in the nucleus. It localises to the chromosome. In terms of biological role, acts both as coactivator and as corepressor. May play a role in chromatin remodeling. Participates in the Wnt signaling pathway. Transcriptional corepressor that down-regulates the expression of target genes. Binds to target promoters, leading to increased histone H3 acetylation. Coactivator for TP53-mediated activation of transcription of a set of target genes. Required for TP53-mediated cell-cycle arrest in response to oncogene activation. Inhibits cell cycle progression from G1 to S phase. The chain is Bromodomain-containing protein 7 (BRD7) from Gallus gallus (Chicken).